The sequence spans 133 residues: uncharacterized protein (133 aa).

Positions lysine 82–glutamine 133 are disordered. Residues tyrosine 86 to lysine 100 are compositionally biased toward polar residues. Over residues glutamine 105 to glutamine 133 the composition is skewed to low complexity.

This is an uncharacterized protein from Acidianus convivator (ABV).